The primary structure comprises 158 residues: Disulfide bond formation protein B (158 aa).

Over 1-7 (MKNSRPV) the chain is Cytoplasmic. A helical membrane pass occupies residues 8-24 (LFAVALASLLLLAVALY). Residues 25–42 (LQHVENMLPCPLCVIQRY) are Periplasmic-facing. The cysteines at positions 34 and 37 are disulfide-linked. Residues 43–57 (AFAAIALICLVTAFR) traverse the membrane as a helical segment. Residues 58-63 (TEVTAR) lie on the Cytoplasmic side of the membrane. The chain crosses the membrane as a helical span at residues 64-81 (IGAALAALASLAGAGVAG). Residues 82–136 (WHIYIKAHPTVSCGIDPLETSLNTIPTAKLLPFLLQADGLCTTEYAPIMGLSIPQ) lie on the Periplasmic side of the membrane. Cys-94 and Cys-122 are disulfide-bonded. Residues 137 to 155 (WALVWFIVIALFLLHTAFR) traverse the membrane as a helical segment. Over 156 to 158 (KKS) the chain is Cytoplasmic.

It belongs to the DsbB family.

The protein resides in the cell inner membrane. In terms of biological role, required for disulfide bond formation in some periplasmic proteins. Acts by oxidizing the DsbA protein. This Herminiimonas arsenicoxydans protein is Disulfide bond formation protein B.